The primary structure comprises 124 residues: MSNYEVAMEAAWLVRDVKETDDAIGVAVSEAGKRLNETDKQYVEVEPGVTGCPACGEPFDAAFLAANTALVGLLLEIDIFNADSEEHAERIAKSEVGGALRDVPLEIIEVIETDGDEDGDRDDE.

This sequence belongs to the UPF0212 family.

In Halorubrum lacusprofundi (strain ATCC 49239 / DSM 5036 / JCM 8891 / ACAM 34), this protein is UPF0212 protein Hlac_0869.